A 301-amino-acid chain; its full sequence is LTTIIPILLAVAFLTLLERKVLGYMQLRKGPNIVGPYGLLQPIADAVKLFIKEPLQPLTSSLALFIIAPTLALTLALMMWIPLPMPHPLINMNLSILFMLALSSLAVYAILWSGWASNSKYALIGALRAVAQTISYEVTLAIIILSILLMNGSFTLSTLITTQEYTWLIMPSWPLAMMWFISTIAETNRAPFDLTEGESELVSGFNVEYAGGPFALFFLAEYANIIMMNALTIILFLGAYNNSTFPEMYTANFMLKALLFTTFFLWIRASYPRFRYDQLMHLLWKNFLPLTLVMCMWHVTL.

8 helical membrane-spanning segments follow: residues 4–24 (IIPI…VLGY), 62–82 (LALF…MWIP), 96–116 (ILFM…SGWA), 140–160 (LAII…STLI), 165–185 (YTWL…STIA), 216–236 (LFFL…IILF), 247–267 (EMYT…FLWI), and 279–299 (LMHL…MWHV).

This sequence belongs to the complex I subunit 1 family.

Its subcellular location is the mitochondrion inner membrane. It catalyses the reaction a ubiquinone + NADH + 5 H(+)(in) = a ubiquinol + NAD(+) + 4 H(+)(out). Core subunit of the mitochondrial membrane respiratory chain NADH dehydrogenase (Complex I) that is believed to belong to the minimal assembly required for catalysis. Complex I functions in the transfer of electrons from NADH to the respiratory chain. The immediate electron acceptor for the enzyme is believed to be ubiquinone. The sequence is that of NADH-ubiquinone oxidoreductase chain 1 (MT-ND1) from Nyctalus noctula (Noctule bat).